Reading from the N-terminus, the 155-residue chain is Small ribosomal subunit protein uS7c (155 aa).

It belongs to the universal ribosomal protein uS7 family. Part of the 30S ribosomal subunit.

The protein resides in the plastid. Its subcellular location is the chloroplast. Its function is as follows. One of the primary rRNA binding proteins, it binds directly to 16S rRNA where it nucleates assembly of the head domain of the 30S subunit. This is Small ribosomal subunit protein uS7c from Beta vulgaris (Sugar beet).